We begin with the raw amino-acid sequence, 344 residues long: Methionine import ATP-binding protein MetN 1 (344 aa).

One can recognise an ABC transporter domain in the interval 2-241 (IEIRNLSQRF…PHHEVTRALI (240 aa)). 38–45 (GRSGAGKS) is a binding site for ATP.

It belongs to the ABC transporter superfamily. Methionine importer (TC 3.A.1.24) family. The complex is composed of two ATP-binding proteins (MetN), two transmembrane proteins (MetI) and a solute-binding protein (MetQ).

It localises to the cell inner membrane. The enzyme catalyses L-methionine(out) + ATP + H2O = L-methionine(in) + ADP + phosphate + H(+). It carries out the reaction D-methionine(out) + ATP + H2O = D-methionine(in) + ADP + phosphate + H(+). Part of the ABC transporter complex MetNIQ involved in methionine import. Responsible for energy coupling to the transport system. This chain is Methionine import ATP-binding protein MetN 1, found in Burkholderia mallei (strain ATCC 23344).